The following is a 2213-amino-acid chain: Protein sidekick-1 (2213 aa).

The segment at 1 to 73 (MARGARPSAA…GAGRCGGRRA (73 aa)) is disordered. Residues 23–38 (AGPGRPRGSPPGRARP) are compositionally biased toward low complexity. Ig-like C2-type domains are found at residues 104-186 (PYFK…SEVQ), 191-277 (GSFM…SPFI), 293-378 (PTIV…RATA), 386-476 (PYFT…LDVT), and 480-569 (PVFT…ATLT). A disulfide bond links Cys-126 and Cys-169. Asn-271 and Asn-301 each carry an N-linked (GlcNAc...) asparagine glycan. 3 disulfides stabilise this stretch: Cys-315/Cys-362, Cys-408/Cys-458, and Cys-501/Cys-553. N-linked (GlcNAc...) asparagine glycosylation is found at Asn-550, Asn-563, and Asn-572. The region spanning 574–663 (TSIVHPPEDH…GNDSRMARLE (90 aa)) is the Ig-like C2-type 6 domain. A disulfide bridge links Cys-595 with Cys-647. N-linked (GlcNAc...) asparagine glycosylation is found at Asn-655, Asn-679, Asn-782, Asn-821, Asn-882, Asn-1015, and Asn-1024. 13 consecutive Fibronectin type-III domains span residues 670 to 766 (SPQN…LPEE), 771 to 867 (PPKN…TLQG), 872 to 970 (PPQN…TQED), 974 to 1068 (AVGH…VPPD), 1072 to 1171 (APSN…TLQA), 1176 to 1274 (APTS…TRES), 1279 to 1376 (APEN…TKDD), 1380 to 1474 (PPVR…TEKR), 1479 to 1576 (PPRE…TLQD), 1581 to 1699 (PPGS…VGEA), 1704 to 1800 (APQN…THQA), 1804 to 1899 (APSF…AGPA), and 1902 to 2000 (SPGS…SAQV). Residues Asn-1282 and Asn-1333 are each glycosylated (N-linked (GlcNAc...) asparagine). Asn-1654, Asn-1748, Asn-1767, Asn-1819, and Asn-1893 each carry an N-linked (GlcNAc...) asparagine glycan. Residues 2010–2030 (FLLVMALSSLIVILLVVFALV) traverse the membrane as a helical segment. Over 2031–2213 (LHGQNKKYKN…TPLTGFSSFV (183 aa)) the chain is Cytoplasmic. Residues 2075–2098 (STFSKKNGTRSPPRPSPGGLHYSD) are disordered. Residues 2207–2213 (TGFSSFV) carry the PDZ-binding motif.

This sequence belongs to the sidekick family. In terms of assembly, homodimer; mediates homophilic interactions to promote cell adhesion. In terms of tissue distribution, up-regulated in glomeruli in HIV-associated nephropathy. In diseased glomeruli, significantly overexpressed and the expression is no longer restricted to mesangial cells but includes podocytes and parietal epithelial cells.

Its subcellular location is the cell membrane. It localises to the synapse. Functionally, adhesion molecule that promotes lamina-specific synaptic connections in the retina. Expressed in specific subsets of interneurons and retinal ganglion cells (RGCs) and promotes synaptic connectivity via homophilic interactions. The polypeptide is Protein sidekick-1 (Homo sapiens (Human)).